Here is a 495-residue protein sequence, read N- to C-terminus: Cytochrome P450 monooxygenase BOA4 (495 aa).

A helical membrane pass occupies residues 12–31 (LANSNTVIAGCIVFALYYLF). N115 carries N-linked (GlcNAc...) asparagine glycosylation. C439 serves as a coordination point for heme.

Belongs to the cytochrome P450 family. Heme is required as a cofactor.

The protein localises to the membrane. Its pathway is polyketide biosynthesis. Its function is as follows. Cytochrome P450 monooxygenase; part of the gene cluster A that mediates the biosynthesis of botcinic acid and its botcinin derivatives, acetate-derived polyketides that contribute to virulence when combined with the sesquiterpene botrydial. Botcinic acid and its derivatives have been shown to induce chlorosis and necrosis during host plant infection, but also have antifungal activities. Two polyketide synthases, BOA6 and BOA9, are involved in the biosynthesis of botcinins. BOA6 mediates the formation of the per-methylated tetraketide core by condensation of four units of malonyl-CoA with one unit of acetyl-CoA, which would be methylated in activated methylene groups to yield a bicyclic acid intermediate that could then either be converted to botrylactone derivatives or lose the starter acetate unit through a retro-Claisen type C-C bond cleavage to yield botcinin derivatives. The second polyketide synthase, BOA9, is probably required for the biosynthesis of the tetraketide side chain of botcinins. The methyltransferase (MT) domain within BOA6 is probably responsible for the incorporation of four methyl groups. The trans-enoyl reductase BOA5 might take over the enoyl reductase function of BOA6 that misses an ER domain. The monooxygenases BOA2, BOA3 and BOA4 might be involved in further hydroxylations at C4, C5 and C8, whereas BOA7, close to BOA9, could potentially be involved in the hydroxylation at C4 in the side chain of botcinins. In Botryotinia fuckeliana (strain B05.10) (Noble rot fungus), this protein is Cytochrome P450 monooxygenase BOA4.